Here is a 424-residue protein sequence, read N- to C-terminus: Serine--tRNA ligase (424 aa).

Residue threonine 229–glutamate 231 coordinates L-serine. Position 260–262 (arginine 260–glutamate 262) interacts with ATP. An L-serine-binding site is contributed by glutamate 283. Glutamate 347–serine 350 contributes to the ATP binding site. Serine 383 provides a ligand contact to L-serine.

The protein belongs to the class-II aminoacyl-tRNA synthetase family. Type-1 seryl-tRNA synthetase subfamily. In terms of assembly, homodimer. The tRNA molecule binds across the dimer.

It is found in the cytoplasm. The enzyme catalyses tRNA(Ser) + L-serine + ATP = L-seryl-tRNA(Ser) + AMP + diphosphate + H(+). It carries out the reaction tRNA(Sec) + L-serine + ATP = L-seryl-tRNA(Sec) + AMP + diphosphate + H(+). Its pathway is aminoacyl-tRNA biosynthesis; selenocysteinyl-tRNA(Sec) biosynthesis; L-seryl-tRNA(Sec) from L-serine and tRNA(Sec): step 1/1. Its function is as follows. Catalyzes the attachment of serine to tRNA(Ser). Is also able to aminoacylate tRNA(Sec) with serine, to form the misacylated tRNA L-seryl-tRNA(Sec), which will be further converted into selenocysteinyl-tRNA(Sec). This chain is Serine--tRNA ligase, found in Roseiflexus sp. (strain RS-1).